Here is a 239-residue protein sequence, read N- to C-terminus: Transcriptional regulatory protein DcuR (239 aa).

The Response regulatory domain occupies Asn3–Arg121. Asp56 is modified (4-aspartylphosphate). Residues Thr181–Ile200 constitute a DNA-binding region (H-T-H motif).

In terms of processing, phosphorylated and activated by DcuS.

It is found in the cytoplasm. Its function is as follows. Member of the two-component regulatory system DcuR/DcuS. Involved in the C4-dicarboxylate-stimulated regulation of the genes encoding the anaerobic fumarate respiratory system (frdABCD; nuoAN; dcuB; dcuC; sdhCDAB; etc.). Weakly regulates the aerobic C4-dicarboxylate transporter dctA. The polypeptide is Transcriptional regulatory protein DcuR (dcuR) (Shigella flexneri).